We begin with the raw amino-acid sequence, 112 residues long: Probable insulin-like peptide beta-type 5 (112 aa).

Residues 1–19 form the signal peptide; sequence MNSVFTIIFVLCALQVAAS. Positions 20–58 are cleaved as a propeptide — removed; by convertase egl-3; that stretch reads FRQSFGPSMSEESASMQLLRELQHNMMESAHRPMPRARR. 4 cysteine pairs are disulfide-bonded: cysteine 68-cysteine 97, cysteine 80-cysteine 110, cysteine 84-cysteine 111, and cysteine 96-cysteine 101.

This sequence belongs to the insulin family. Post-translationally, may be processed by serine endoprotease bli-4. Expressed by ASI and ASJ sensory neurons.

It localises to the secreted. Its function is as follows. Probable insulin-like peptide which negatively regulates synapse development at the neuromuscular junctions. Probably acts as a daf-2/InsR agonist ligand to prevent dauer formation under optimal environmental conditions. Acts on AWC sensory neurons to regulate high salt chemotaxis responses. The polypeptide is Probable insulin-like peptide beta-type 5 (ins-6) (Caenorhabditis elegans).